The sequence spans 486 residues: uncharacterized protein (486 aa).

2 ABC transporter domains span residues Val-2–Val-241 and Phe-249–Leu-486. Gly-36–Ser-43 is a binding site for ATP.

This sequence belongs to the ABC transporter superfamily.

This is an uncharacterized protein from Borreliella burgdorferi (strain ATCC 35210 / DSM 4680 / CIP 102532 / B31) (Borrelia burgdorferi).